The primary structure comprises 157 residues: Cyclic pyranopterin monophosphate synthase (157 aa).

Substrate is bound by residues 73-75 (LCH) and 110-111 (ME). The active site involves Asp-125.

It belongs to the MoaC family. As to quaternary structure, homohexamer; trimer of dimers.

It carries out the reaction (8S)-3',8-cyclo-7,8-dihydroguanosine 5'-triphosphate = cyclic pyranopterin phosphate + diphosphate. It functions in the pathway cofactor biosynthesis; molybdopterin biosynthesis. Functionally, catalyzes the conversion of (8S)-3',8-cyclo-7,8-dihydroguanosine 5'-triphosphate to cyclic pyranopterin monophosphate (cPMP). This chain is Cyclic pyranopterin monophosphate synthase, found in Pseudomonas fluorescens (strain SBW25).